Here is a 373-residue protein sequence, read N- to C-terminus: Protein RETARDED ROOT GROWTH, mitochondrial (373 aa).

The transit peptide at 1 to 49 directs the protein to the mitochondrion; the sequence is MGKWRAVAALLLRNQLLNSSKRLNLSSSPCVSKHPTIGLASRFLNFRHF. Residues 346–362 form a helical membrane-spanning segment; that stretch reads EWCIIFLLAIENAIGIY.

The protein belongs to the RMD1/sif2 family. In terms of tissue distribution, predominantly expressed in the root meristem, in the primary and lateral root tips. Also present in leaves and pollen.

It localises to the mitochondrion membrane. Its subcellular location is the mitochondrion. Functionally, required for the maintenance of mitochondrial structure. Positive regulator of cell division and endoreduplication but negative regulator of cell expansion in the postembryonic root meristem, thus leading to the promotion of root growth. The protein is Protein RETARDED ROOT GROWTH, mitochondrial of Arabidopsis thaliana (Mouse-ear cress).